The sequence spans 211 residues: UPF0329 protein ECU07_1880/ECU10_0020 (211 aa).

It belongs to the UPF0329 family.

This chain is UPF0329 protein ECU07_1880/ECU10_0020, found in Encephalitozoon cuniculi (strain GB-M1) (Microsporidian parasite).